Here is a 41-residue protein sequence, read N- to C-terminus: Replication-associated protein (41 aa).

Involved in viral RNA replication. This is Replication-associated protein from Potato leafroll virus (strain Potato/Scotland/strain 1/1984) (PLrV).